Reading from the N-terminus, the 272-residue chain is Small ribosomal subunit protein uS2 (272 aa).

Residues 251-272 (LLTEGAPAAEAPAEAEGETKAE) form a disordered region. The segment covering 253–264 (TEGAPAAEAPAE) has biased composition (low complexity).

This sequence belongs to the universal ribosomal protein uS2 family.

In Bifidobacterium adolescentis (strain ATCC 15703 / DSM 20083 / NCTC 11814 / E194a), this protein is Small ribosomal subunit protein uS2.